Consider the following 1320-residue polypeptide: Centrosomin (1320 aa).

The disordered stretch occupies residues 20 to 41; the sequence is ASFDVPRPPGGGNSPLPSQGRS. Positions 97–516 form a coiled coil; that stretch reads RKTVDVKMEL…SSQEKEIKKL (420 aa). Positions 517–530 are enriched in basic and acidic residues; the sequence is NQENEQSANKENDC. Residues 517–554 form a disordered region; sequence NQENEQSANKENDCAKTVISPSSSGRSMSDNEASSQEM. Residues 535–554 show a composition bias toward polar residues; it reads ISPSSSGRSMSDNEASSQEM. The residue at position 545 (Ser-545) is a Phosphoserine. 2 coiled-coil regions span residues 626 to 654 and 712 to 983; these read EADL…KVDV and NSLL…LKLA. A Nuclear localization signal motif is present at residues 644 to 656; the sequence is RNKLLQRKVDVLF. Thr-782 is subject to Phosphothreonine. A Phosphoserine modification is found at Ser-785. The segment covering 810 to 823 has biased composition (basic and acidic residues); that stretch reads KKELEKRRSSEGQR. 2 disordered regions span residues 810–849 and 863–893; these read KKEL…SEPD and SNSL…NRNS. The span at 831–843 shows a compositional bias: polar residues; it reads LPSQQFDNQSESE. 7 positions are modified to phosphoserine: Ser-874, Ser-876, Ser-878, Ser-1191, Ser-1234, Ser-1237, and Ser-1239. A disordered region spans residues 1220–1249; that stretch reads VEMKTEGSASPKAKSEESTSPDSKSNVATG. Polar residues predominate over residues 1237-1247; it reads STSPDSKSNVA.

As to quaternary structure, monomer. In terms of tissue distribution, developing visceral mesoderm of the midgut, the central and peripheral nervous system, and developing gonads. Isoform J: Expressed in ovaries, testis and embryos. Isoform A: Expressed in testis only.

The protein localises to the cytoplasm. The protein resides in the cytoskeleton. Its subcellular location is the microtubule organizing center. It localises to the centrosome. It is found in the flagellum basal body. The protein localises to the perinuclear region. In terms of biological role, core component of the centrosome throughout spermatogenesis. May participate in mitotic spindle assembly and the mechanics of morphogenesis through an interaction with microtubules, either directly or indirectly. Is a target of several homeotic genes. This is Centrosomin (cnn) from Drosophila melanogaster (Fruit fly).